The primary structure comprises 249 residues: Metallo-beta-lactamase type 2 (249 aa).

An N-terminal signal peptide occupies residues 1–22; it reads MLKRLKGLLVLALGFTGLQVFG. Residues His98, His100, Asp102, His161, and Cys180 each contribute to the Zn(2+) site. Lys183 provides a ligand contact to substrate. Zn(2+) is bound at residue His222.

Belongs to the metallo-beta-lactamase superfamily. Class-B beta-lactamase family. In terms of assembly, monomer. Zn(2+) is required as a cofactor.

The protein localises to the periplasm. It catalyses the reaction a beta-lactam + H2O = a substituted beta-amino acid. Functionally, confers resistance to the different beta-lactams antibiotics (penicillin, cephalosporin and carbapenem) via the hydrolysis of the beta-lactam ring. This chain is Metallo-beta-lactamase type 2 (blaB5), found in Elizabethkingia meningoseptica (Chryseobacterium meningosepticum).